The sequence spans 336 residues: Holliday junction branch migration complex subunit RuvB (336 aa).

Positions 4–184 (ADRLISATGV…FGIVQRLEFY (181 aa)) are large ATPase domain (RuvB-L). Residues Ile23, Arg24, Gly65, Lys68, Thr69, Thr70, 131 to 133 (EDY), Arg174, Tyr184, and Arg221 contribute to the ATP site. Residue Thr69 participates in Mg(2+) binding. Positions 185 to 255 (NVKDLTDIVS…IAARAMDMLD (71 aa)) are small ATPAse domain (RuvB-S). Residues 258 to 336 (NEGFDFMDRK…HFGLQRPDER (79 aa)) form a head domain (RuvB-H) region. DNA contacts are provided by Arg313 and Arg318.

The protein belongs to the RuvB family. In terms of assembly, homohexamer. Forms an RuvA(8)-RuvB(12)-Holliday junction (HJ) complex. HJ DNA is sandwiched between 2 RuvA tetramers; dsDNA enters through RuvA and exits via RuvB. An RuvB hexamer assembles on each DNA strand where it exits the tetramer. Each RuvB hexamer is contacted by two RuvA subunits (via domain III) on 2 adjacent RuvB subunits; this complex drives branch migration. In the full resolvosome a probable DNA-RuvA(4)-RuvB(12)-RuvC(2) complex forms which resolves the HJ.

Its subcellular location is the cytoplasm. It catalyses the reaction ATP + H2O = ADP + phosphate + H(+). Its function is as follows. The RuvA-RuvB-RuvC complex processes Holliday junction (HJ) DNA during genetic recombination and DNA repair, while the RuvA-RuvB complex plays an important role in the rescue of blocked DNA replication forks via replication fork reversal (RFR). RuvA specifically binds to HJ cruciform DNA, conferring on it an open structure. The RuvB hexamer acts as an ATP-dependent pump, pulling dsDNA into and through the RuvAB complex. RuvB forms 2 homohexamers on either side of HJ DNA bound by 1 or 2 RuvA tetramers; 4 subunits per hexamer contact DNA at a time. Coordinated motions by a converter formed by DNA-disengaged RuvB subunits stimulates ATP hydrolysis and nucleotide exchange. Immobilization of the converter enables RuvB to convert the ATP-contained energy into a lever motion, pulling 2 nucleotides of DNA out of the RuvA tetramer per ATP hydrolyzed, thus driving DNA branch migration. The RuvB motors rotate together with the DNA substrate, which together with the progressing nucleotide cycle form the mechanistic basis for DNA recombination by continuous HJ branch migration. Branch migration allows RuvC to scan DNA until it finds its consensus sequence, where it cleaves and resolves cruciform DNA. The polypeptide is Holliday junction branch migration complex subunit RuvB (Aeromonas salmonicida (strain A449)).